Consider the following 232-residue polypeptide: Large ribosomal subunit protein uL1 (232 aa).

This sequence belongs to the universal ribosomal protein uL1 family. Part of the 50S ribosomal subunit.

In terms of biological role, binds directly to 23S rRNA. The L1 stalk is quite mobile in the ribosome, and is involved in E site tRNA release. Functionally, protein L1 is also a translational repressor protein, it controls the translation of the L11 operon by binding to its mRNA. In Francisella tularensis subsp. holarctica (strain LVS), this protein is Large ribosomal subunit protein uL1.